We begin with the raw amino-acid sequence, 439 residues long: GTPase Der (439 aa).

2 consecutive EngA-type G domains span residues 2-168 (ATVL…EEKG) and 181-357 (IKVA…ASYT). Residues 8–15 (GKPNVGKS), 55–59 (DTCGV), 118–121 (NKTE), 187–194 (GRPNVGKS), 234–238 (DTAGL), and 300–303 (NKWD) each bind GTP. The region spanning 358-439 (TKVPSSAINS…PIFLKFKRSR (82 aa)) is the KH-like domain.

The protein belongs to the TRAFAC class TrmE-Era-EngA-EngB-Septin-like GTPase superfamily. EngA (Der) GTPase family. In terms of assembly, associates with the 50S ribosomal subunit.

Functionally, GTPase that plays an essential role in the late steps of ribosome biogenesis. The polypeptide is GTPase Der (Thermotoga petrophila (strain ATCC BAA-488 / DSM 13995 / JCM 10881 / RKU-1)).